Consider the following 302-residue polypeptide: Recombination-associated protein RdgC (302 aa).

The protein belongs to the RdgC family.

Its subcellular location is the cytoplasm. The protein localises to the nucleoid. Functionally, may be involved in recombination. The chain is Recombination-associated protein RdgC from Psychromonas ingrahamii (strain DSM 17664 / CCUG 51855 / 37).